The following is a 296-amino-acid chain: Transcription repressor OFP3 (296 aa).

2 disordered regions span residues 27–115 (MSRS…SANA) and 131–196 (PSDQ…AHSS). The span at 60–69 (LSSTAHHPQA) shows a compositional bias: polar residues. The segment covering 78 to 88 (SFKRKIKRKTV) has biased composition (basic residues). The span at 92–115 (SSRLKLSTSSSLNHRSKSSSSANA) shows a compositional bias: low complexity. Positions 136 to 159 (FVHDPEPHSSIDIKDELSVRKLDD) are enriched in basic and acidic residues. The 60-residue stretch at 228 to 287 (IVLSSVDPEKDFRESMVEMIMENKMREQKDLEDLLACYLSLNSSEYHDVIIKAFENTWLH) folds into the OVATE domain.

As to quaternary structure, interacts with BLH1, BLH3, KNAT5 and KNAT7.

It is found in the nucleus. Its function is as follows. Transcriptional repressor that may regulate multiple aspects of plant growth and development through the regulation of BEL1-LIKE (BLH) and KNOX TALE (KNAT) homeodomain transcription factors. This chain is Transcription repressor OFP3 (OFP3), found in Arabidopsis thaliana (Mouse-ear cress).